A 426-amino-acid chain; its full sequence is Crinkler effector protein 4 (426 aa).

Residues 20-57 (VEIDDSAKVSKLKKVIKEENPATITCDAKDLQLFLAKK) are LQLFLAK domain. The DWL domain stretch occupies residues 59–107 (DAWLDGAGAAAVELDEHGHPQGCVQMDPTLWVKNPKHFGDNFQPGEGQV). Residues 108–114 (HVLVVVP) carry the HVLVXXP motif motif. The interval 115–426 (EGVVGSASET…RSIPTLSYFS (312 aa)) is effector domain.

The protein belongs to the Crinkler effector family.

It localises to the secreted. The protein resides in the host nucleus. Its function is as follows. Secreted effector that is critical to pathogenesis by suppressing plant immune responsess. Promotes Phytophthora infection by suppressing the H(2)O(2) accumulation and callose deposition. May induce cell death by regulating expression of cell death-related genes. The chain is Crinkler effector protein 4 from Phytophthora capsici.